The following is a 277-amino-acid chain: MLVDELGVKIVHAQHVPAPYLVQRMREIHERDENRQRHAQVDVQRRRDQPERGQHQHRRNRDADHHPDGRTLAGQIVAHPVSHRVRQPRPVAIADVLPRVGPRADCVVAHSLQGSPRRRERRRGQTAHQRLGRRSGNAIACPLYLENAAGPEPDTKRAEGRRFGAFGGGDLRWMADRVPRQGSGRRGLGSRSGAGVPQGADARGWRHTADGVPRVGQPAIRRGVPGFWCWLDHVLTGFGGRNAICAIEDGVEPRVAWWALCTDFDVPRSMGRRTPGG.

A compositionally biased stretch (basic and acidic residues) spans 31–54 (RDENRQRHAQVDVQRRRDQPERGQ). 3 disordered regions span residues 31–70 (RDEN…PDGR), 113–133 (QGSP…RLGR), and 180–210 (RQGS…HTAD). Residues 116–133 (PRRRERRRGQTAHQRLGR) show a composition bias toward basic residues.

Interacts with Rv2743c.

Functionally, involved in preservation of envelope integrity and tolerance to surface stress. Reverses the inhibitory effect of PspA on ClgR activity. Facilitates intracellular growth of M.tuberculosis. This Mycobacterium tuberculosis (strain ATCC 25618 / H37Rv) protein is Putative envelope-preserving system protein Rv2742c.